The primary structure comprises 257 residues: MNPLVIKLGGVLLESDDAMKRLFEALVDYQKFYKRHVSVIHGGGRLIDNLMNKLSLPVKKKNGLRITPSEHINIITGALAGTANKTLLAWALKYNINAIGLCLADGGSIDVERLDENLGHVGKAIPGSPLFLKKLFKEGAIPIISSIGITKDGLLMNVNADLAATALATTLQANLILLSDISSILDGKGQRITEIDSIQAEKLIMQGIITNGMIVKVRAALEAARVLRRPVDIASWQNTEKLKLLFNGVNIGTRVYV.

Substrate is bound by residues 43–44, Arg65, and Asn157; that span reads GG. Residues 180 to 185 and 208 to 210 each bind ATP; these read DISSIL and IIT.

This sequence belongs to the acetylglutamate kinase family. ArgB subfamily. As to quaternary structure, homodimer.

The protein resides in the cytoplasm. It catalyses the reaction N-acetyl-L-glutamate + ATP = N-acetyl-L-glutamyl 5-phosphate + ADP. It functions in the pathway amino-acid biosynthesis; L-arginine biosynthesis; N(2)-acetyl-L-ornithine from L-glutamate: step 2/4. In terms of biological role, catalyzes the ATP-dependent phosphorylation of N-acetyl-L-glutamate. The polypeptide is Acetylglutamate kinase (Buchnera aphidicola subsp. Acyrthosiphon pisum (strain Tuc7)).